We begin with the raw amino-acid sequence, 238 residues long: Large ribosomal subunit protein uL2 (238 aa).

The interval 199-238 is disordered; sequence PHGGGLHQSVSRSSTVARNTPPGRKVGHIAARRTGRRDRK. The segment covering 206 to 216 has biased composition (polar residues); that stretch reads QSVSRSSTVAR. The span at 223–238 shows a compositional bias: basic residues; sequence KVGHIAARRTGRRDRK.

This sequence belongs to the universal ribosomal protein uL2 family. As to quaternary structure, part of the 50S ribosomal subunit. Forms a bridge to the 30S subunit in the 70S ribosome.

Functionally, one of the primary rRNA binding proteins. Required for association of the 30S and 50S subunits to form the 70S ribosome, for tRNA binding and peptide bond formation. It has been suggested to have peptidyltransferase activity; this is somewhat controversial. Makes several contacts with the 16S rRNA in the 70S ribosome. This is Large ribosomal subunit protein uL2 from Metallosphaera sedula (strain ATCC 51363 / DSM 5348 / JCM 9185 / NBRC 15509 / TH2).